The following is a 387-amino-acid chain: MSVIKMTDLDLAGKRVFIRADLNVPVKDGKVTSDARIRASLPTIELALKQGAKVMVTSHLGRPTEGEYNEEFSLLPVVNYLKDKLSNPVRLVKDYLDGVDVAEGELVVLENVRFNKGEKKDDEILSKKYAALCDVFVMDAFGTAHRAQASTHGIGKFADVACAGPLLAAELDALGKALKEPARPMVAIVGGSKVSTKLTVLDSLSKIADQLIVGGGIANTFIAAQGHDVGKSLYEADLVDEAKRLLTTCNIPVPSDVRVATEFSETAPATLKSVNDVKADEQILDIGDASAQELAEILKNAKTILWNGPVGVFEFPNFRKGTEIVANAIADSEAFSIAGGGDTLAAIDLFGIADKISYISTGGGAFLEFVEGKVLPAVAMLEERAKK.

Residues 21 to 23 (DLN), Arg-36, and 59 to 62 (HLGR) contribute to the substrate site. Lys-84 is modified (N6-acetyllysine). Residues Arg-113 and Arg-146 each contribute to the substrate site. ATP is bound by residues Lys-197, Glu-314, and 340–343 (GGDT).

The protein belongs to the phosphoglycerate kinase family. Monomer.

It localises to the cytoplasm. The catalysed reaction is (2R)-3-phosphoglycerate + ATP = (2R)-3-phospho-glyceroyl phosphate + ADP. It functions in the pathway carbohydrate degradation; glycolysis; pyruvate from D-glyceraldehyde 3-phosphate: step 2/5. The protein is Phosphoglycerate kinase (pgk) of Escherichia coli O157:H7.